A 158-amino-acid chain; its full sequence is NAD(P)H-quinone oxidoreductase subunit J, chloroplastic (158 aa).

Belongs to the complex I 30 kDa subunit family. NDH is composed of at least 16 different subunits, 5 of which are encoded in the nucleus.

The protein localises to the plastid. It localises to the chloroplast thylakoid membrane. The enzyme catalyses a plastoquinone + NADH + (n+1) H(+)(in) = a plastoquinol + NAD(+) + n H(+)(out). It carries out the reaction a plastoquinone + NADPH + (n+1) H(+)(in) = a plastoquinol + NADP(+) + n H(+)(out). In terms of biological role, NDH shuttles electrons from NAD(P)H:plastoquinone, via FMN and iron-sulfur (Fe-S) centers, to quinones in the photosynthetic chain and possibly in a chloroplast respiratory chain. The immediate electron acceptor for the enzyme in this species is believed to be plastoquinone. Couples the redox reaction to proton translocation, and thus conserves the redox energy in a proton gradient. The chain is NAD(P)H-quinone oxidoreductase subunit J, chloroplastic from Draba nemorosa (Woodland whitlowgrass).